Here is a 404-residue protein sequence, read N- to C-terminus: Proteasomal ubiquitin receptor ADRM1-A (404 aa).

The 114-residue stretch at 17–130 folds into the Pru domain; sequence SSSKYLVEFR…RKLNEYLNNP (114 aa). Low complexity predominate over residues 195 to 247; that stretch reads GSGGPTTSSSSSSSRSQSAAVTPSSTTSSTRTTSAPVAPAAAPATTPSPAVSS. Disordered stretches follow at residues 195-258 and 376-404; these read GSGG…TSPT and FAKA…MSLD. The segment covering 248 to 258 has biased composition (polar residues); that stretch reads NDGASEATSPT. Residues 278–390 enclose the DEUBAD domain; that stretch reads TGEGGQQVDL…QSTSSQKERE (113 aa). A compositionally biased stretch (basic and acidic residues) spans 386–395; sequence QKERESSEKK.

Belongs to the ADRM1 family. As to quaternary structure, component of the 19S proteasome regulatory particle complex. The 26S proteasome consists of a 20S core particle (CP) and two 19S regulatory subunits (RP).

It localises to the cytoplasm. The protein localises to the nucleus. Its function is as follows. Component of the 26S proteasome, a multiprotein complex involved in the ATP-dependent degradation of ubiquitinated proteins. This complex plays a key role in the maintenance of protein homeostasis by removing misfolded or damaged proteins, which could impair cellular functions, and by removing proteins whose functions are no longer required. Therefore, the proteasome participates in numerous cellular processes, including cell cycle progression, apoptosis, or DNA damage repair. Within the complex, functions as a proteasomal ubiquitin receptor. The sequence is that of Proteasomal ubiquitin receptor ADRM1-A (adrm1-a) from Xenopus laevis (African clawed frog).